Consider the following 314-residue polypeptide: 3'-5' exoribonuclease YhaM (314 aa).

A DNA-binding region (OB) is located at residues 22 to 90 (SSTKGIASNG…QLKLRNIRPV (69 aa)). The region spanning 163–279 (HVVSMLNLAK…LHYIDNLDAK (117 aa)) is the HD domain.

Belongs to the YhaM family. Mn(2+) is required as a cofactor. The cofactor is Co(2+).

Shows a 3'-5' exoribonuclease activity as well as single-stranded DNA 3'-5'exonuclease activity. Plays a role in the secondary pathway of 23S rRNA 3' end maturation. In Bacillus subtilis (strain 168), this protein is 3'-5' exoribonuclease YhaM.